Here is a 105-residue protein sequence, read N- to C-terminus: Endogenous retrovirus group K member 6 Rec protein (105 aa).

The interval 1–49 (MNPSEMQRKAPPRRRRHRNRAPLTHKMNKMVTSEEQMKLPSTKKAEPPT) is disordered. Positions 10–20 (APPRRRRHRNR) are enriched in basic residues. Positions 13-20 (RRRRHRNR) match the Nuclear localization signal motif. The Nuclear export signal signature appears at 50–59 (WAQLKKLTQL).

As to quaternary structure, forms homodimers, homotrimers, and homotetramers via a C-terminal domain. Associates with XPO1 and with ZNF145. Expressed at higher level in placenta, expressed at lower level in several organs and cell lines.

The protein resides in the cytoplasm. The protein localises to the nucleus. It localises to the nucleolus. Functionally, retroviral replication requires the nuclear export and translation of unspliced, singly-spliced and multiply-spliced derivatives of the initial genomic transcript. Rec interacts with a highly structured RNA element (RcRE) present in the viral 3'LTR and recruits the cellular nuclear export machinery. This permits export to the cytoplasm of unspliced genomic or incompletely spliced subgenomic viral transcripts. The protein is Endogenous retrovirus group K member 6 Rec protein (ERVK-6) of Homo sapiens (Human).